We begin with the raw amino-acid sequence, 468 residues long: MGRRSGGRKLPFFASNASTSSSTKRTRSARRLPSLTRPRASSSPSPASPSPPPPSASHPAPPSPPLAVSPAGAGKVGKKKAGARLWMRLDRWGVSETLHLDKGSIIRRAGLPPRDLRILGPVFSDSSSILAREKAMVINLEFIRAIVTADEILLLDPLTIDVIPFVEQLTHHLPLKNLVCGNGQPGGDDHGEKHDDSHGDQVPRLNEATGAEHELPFEFQVLELALETVCSSFDVNVSGLERRATPVLEELTKNVSTRNLDRVRTLKSDLTRLLAHVQKVRDEIEHLLDDNEDMAHLYLTRKQLQNQQVEALISSAASNSIVPGGTSLSRLNNSFRRSVSIATSMHLDNDVEDLEMLLEAYFMQLDGIRNRILSVREYIDDTEDYVNIQLDNQRNELIQLQLTLTIASFGIAVNTFIAGAFAMNIQSKLYSIDDGSFFWPFVGGTSSGCFMICIVLLWYARWKKLLGP.

2 disordered regions span residues 1–76 and 183–204; these read MGRR…AGKV and GQPG…QVPR. Composition is skewed to low complexity over residues 14–23 and 31–45; these read ASNASTSSST and RLPS…SSPS. Residues 46–67 show a composition bias toward pro residues; it reads PASPSPPPPSASHPAPPSPPLA. Residues 187-201 are compositionally biased toward basic and acidic residues; it reads GDDHGEKHDDSHGDQ. Helical transmembrane passes span 402–422 and 437–457; these read LTLT…GAFA and FFWP…IVLL.

The protein belongs to the CorA metal ion transporter (MIT) (TC 1.A.35.5) family. In terms of assembly, interacts with CYCB2-2.

Its subcellular location is the membrane. Putative magnesium transporter. This is Putative magnesium transporter MRS2-G (MRS2-G) from Oryza sativa subsp. japonica (Rice).